The sequence spans 184 residues: ATP synthase subunit b, chloroplastic (184 aa).

Residues 29 to 49 (INLINLILVLGILFYYGKGVL) traverse the membrane as a helical segment.

It belongs to the ATPase B chain family. In terms of assembly, F-type ATPases have 2 components, F(1) - the catalytic core - and F(0) - the membrane proton channel. F(1) has five subunits: alpha(3), beta(3), gamma(1), delta(1), epsilon(1). F(0) has four main subunits: a(1), b(1), b'(1) and c(10-14). The alpha and beta chains form an alternating ring which encloses part of the gamma chain. F(1) is attached to F(0) by a central stalk formed by the gamma and epsilon chains, while a peripheral stalk is formed by the delta, b and b' chains.

It localises to the plastid. It is found in the chloroplast thylakoid membrane. F(1)F(0) ATP synthase produces ATP from ADP in the presence of a proton or sodium gradient. F-type ATPases consist of two structural domains, F(1) containing the extramembraneous catalytic core and F(0) containing the membrane proton channel, linked together by a central stalk and a peripheral stalk. During catalysis, ATP synthesis in the catalytic domain of F(1) is coupled via a rotary mechanism of the central stalk subunits to proton translocation. Its function is as follows. Component of the F(0) channel, it forms part of the peripheral stalk, linking F(1) to F(0). The chain is ATP synthase subunit b, chloroplastic from Adiantum capillus-veneris (Maidenhair fern).